Here is a 661-residue protein sequence, read N- to C-terminus: Putative core protein L410 (661 aa).

Basic and acidic residues predominate over residues 1-11; the sequence is MADNKGRRDTF. The tract at residues 1-26 is disordered; sequence MADNKGRRDTFDVSGDTNTNATSNKR. Residues 15–25 are compositionally biased toward polar residues; it reads GDTNTNATSNK. A coiled-coil region spans residues 112 to 140; sequence KKENKWSDKEYDEFRKELTNLLTGNRALE.

Its subcellular location is the virion. The protein is Putative core protein L410 of Acanthamoeba polyphaga (Amoeba).